A 398-amino-acid chain; its full sequence is Elongation factor Tu (398 aa).

The tr-type G domain occupies 10-207 (KPHVNIGTIG…TADEYIPEPE (198 aa)). The interval 19–26 (GHVDHGKT) is G1. 19-26 (GHVDHGKT) provides a ligand contact to GTP. Thr26 contacts Mg(2+). The tract at residues 63 to 67 (GITIN) is G2. The interval 84 to 87 (DAPG) is G3. Residues 84–88 (DAPGH) and 139–142 (NKID) each bind GTP. The tract at residues 139 to 142 (NKID) is G4. The interval 177–179 (SAL) is G5.

This sequence belongs to the TRAFAC class translation factor GTPase superfamily. Classic translation factor GTPase family. EF-Tu/EF-1A subfamily. In terms of assembly, monomer.

The protein resides in the cytoplasm. The enzyme catalyses GTP + H2O = GDP + phosphate + H(+). In terms of biological role, GTP hydrolase that promotes the GTP-dependent binding of aminoacyl-tRNA to the A-site of ribosomes during protein biosynthesis. The sequence is that of Elongation factor Tu from Streptococcus uberis (strain ATCC BAA-854 / 0140J).